Here is a 320-residue protein sequence, read N- to C-terminus: MIIMRNYKFKLESLHQNQKVFRRCTVHSTVLHIISLHEDWSTRLTYKLSLYYCKIKNCYTTFKFEKSNRSIITRAERIINVQHLRRCKDIVDNFSGLISILLVLIFCINLSGCNTSKRLAYDNKYSYKELSKDDPHNLTYIGHYKVGKNYKIKGKIYKPYTPKYFTETGYASWYGGRKDGFHGKKTANGDRFNRNLLTAAHKTLPLPCLVKVTNKANNKSVILMVNDRGPFKKNRIIDVSQKAAEILAFKNQGITKVRIEYLPNETEKFLKKINLKKTENKIFANNYKESLFTKVTKNNQCSINCHIKLVNLKYKLAVNP.

This sequence belongs to the RlpA family.

In terms of biological role, lytic transglycosylase with a strong preference for naked glycan strands that lack stem peptides. This is Endolytic peptidoglycan transglycosylase RlpA from Rickettsia typhi (strain ATCC VR-144 / Wilmington).